Consider the following 519-residue polypeptide: U3 small nucleolar RNA-associated protein 15 homolog (519 aa).

At alanine 2 the chain carries N-acetylalanine. WD repeat units follow at residues 36-75 (KEFGAVSKVDFSPQPPYNYAVTASSRIHIYGRYSQEPIKT), 78-117 (RFKDTAYCATFRQDGRLLVAGSEDGGVQLFDISGRAPLRQ), 120-159 (GHTKAVHSVDFTADKYHVVSGADDYTVKLWDIPNSKEILT), 162-202 (EHSD…SVIS), 204-242 (EHGQPVESVLLFPSGGLLVSAGGRYVKVWDMLKGGQLLV), 246-285 (NHHKTVTCLCLSSSGQRLLSGSLDRKVKVYSTTSYKVVHS), and 287-326 (DYTASILSLALAHEDETIVVGMTNGILSVKHRKSEAKKDS). Lysine 249 participates in a covalent cross-link: Glycyl lysine isopeptide (Lys-Gly) (interchain with G-Cter in SUMO2).

Part of the small subunit (SSU) processome, composed of more than 70 proteins and the RNA chaperone small nucleolar RNA (snoRNA) U3. May be a component of the proposed t-UTP subcomplex of the ribosomal small subunit (SSU) processome containing at least UTP4, WDR43, HEATR1, UTP15, WDR75. Interacts directly with UTP4 and WDR43.

Its subcellular location is the nucleus. It is found in the nucleolus. Functionally, ribosome biogenesis factor. Involved in nucleolar processing of pre-18S ribosomal RNA. Required for optimal pre-ribosomal RNA transcription by RNA polymerase I. Part of the small subunit (SSU) processome, first precursor of the small eukaryotic ribosomal subunit. During the assembly of the SSU processome in the nucleolus, many ribosome biogenesis factors, an RNA chaperone and ribosomal proteins associate with the nascent pre-rRNA and work in concert to generate RNA folding, modifications, rearrangements and cleavage as well as targeted degradation of pre-ribosomal RNA by the RNA exosome. This is U3 small nucleolar RNA-associated protein 15 homolog from Bos taurus (Bovine).